Here is a 198-residue protein sequence, read N- to C-terminus: Single-stranded DNA cytosine deaminase (198 aa).

The Bipartite nuclear localization signal signature appears at 1–30 (MDSLLMKQKKFLYHFKNVRWAKGRHETYLC). Residues 2-26 (DSLLMKQKKFLYHFKNVRWAKGRHE) form an interaction with SUPT6H region. The region spanning 23-129 (GRHETYLCYV…KAEPEGLRRL (107 aa)) is the CMP/dCMP-type deaminase domain. Position 27 is a phosphothreonine; by PKA (threonine 27). At serine 38 the chain carries Phosphoserine; by PKA. An important for interaction with CTNNBL1 region spans residues 39–42 (ATSC). A Zn(2+)-binding site is contributed by histidine 56. The active-site Proton donor is the glutamate 58. Residues cysteine 87 and cysteine 90 each contribute to the Zn(2+) site. Residues 88 to 116 (YDCARHVAEFLRWNPNLSLRIFTARLYFC) form a required for interaction with RNF126 region. The Nuclear export signal signature appears at 183 to 198 (LYEVDDLRDAFRMLGF).

Belongs to the cytidine and deoxycytidylate deaminase family. Interacts with CTNNBL1; the interaction is important for the immunoglobulin switch activity of AICDA. Interacts (via its NLS) with KPNA1. Interacts with PKA/PRKACA and PRKAR1A/PKR1. Interacts with SUPT6H, TRIM28 and NCL. Directly interacts with MCM3AP/GANP; this interaction may favor AICDA recruitment to immunoglobulin variable region genes, hence promoting somatic hypermutations. Zn(2+) is required as a cofactor. In terms of processing, ser-38 is the major site whereas Thr-27 is the minor site of phosphorylation. Phosphorylation regulates its class-switch recombination activity. Post-translationally, probably monoubiquitinated on several residues by RNF126. Expressed in germinal center B-cells (at protein level).

It is found in the nucleus. The protein resides in the cytoplasm. It carries out the reaction a 2'-deoxycytidine in single-stranded DNA + H2O + H(+) = a 2'-deoxyuridine in single-stranded DNA + NH4(+). Its function is as follows. Single-stranded DNA-specific cytidine deaminase. Involved in somatic hypermutation (SHM), gene conversion, and class-switch recombination (CSR) in B-lymphocytes by deaminating C to U during transcription of Ig-variable (V) and Ig-switch (S) region DNA. Required for several crucial steps of B-cell terminal differentiation necessary for efficient antibody responses. May also play a role in the epigenetic regulation of gene expression by participating in DNA demethylation. This Mus musculus (Mouse) protein is Single-stranded DNA cytosine deaminase (Aicda).